The following is a 54-amino-acid chain: Defensin-like protein 1 (54 aa).

Cystine bridges form between Cys6–Cys54, Cys17–Cys39, Cys23–Cys48, and Cys27–Cys50.

It belongs to the DEFL family.

The protein resides in the secreted. Possesses antifungal activity insensitive to inorganic cations. Causes germ tubes and hyphae to swell and form multiple hyphal buds. Binds to the plasma membrane of the fungus. Has no inhibitory effect on insect gut alpha-amylase. The polypeptide is Defensin-like protein 1 (Heuchera sanguinea (Coralbells)).